Here is a 317-residue protein sequence, read N- to C-terminus: Acetylglutamate kinase (317 aa).

Substrate contacts are provided by residues 70–71 (GG), arginine 92, and asparagine 191.

It belongs to the acetylglutamate kinase family. ArgB subfamily.

Its subcellular location is the cytoplasm. The enzyme catalyses N-acetyl-L-glutamate + ATP = N-acetyl-L-glutamyl 5-phosphate + ADP. It functions in the pathway amino-acid biosynthesis; L-arginine biosynthesis; N(2)-acetyl-L-ornithine from L-glutamate: step 2/4. Catalyzes the ATP-dependent phosphorylation of N-acetyl-L-glutamate. The sequence is that of Acetylglutamate kinase from Corynebacterium glutamicum (strain R).